We begin with the raw amino-acid sequence, 142 residues long: Galactose-6-phosphate isomerase subunit LacA (142 aa).

The protein belongs to the LacAB/RpiB family. In terms of assembly, heteromultimeric protein consisting of LacA and LacB.

It catalyses the reaction aldehydo-D-galactose 6-phosphate = keto-D-tagatose 6-phosphate. Its pathway is carbohydrate metabolism; D-galactose 6-phosphate degradation; D-tagatose 6-phosphate from D-galactose 6-phosphate: step 1/1. This Staphylococcus haemolyticus (strain JCSC1435) protein is Galactose-6-phosphate isomerase subunit LacA.